The primary structure comprises 381 residues: Succinyl-diaminopimelate desuccinylase (381 aa).

His-68 lines the Zn(2+) pocket. The active site involves Asp-70. Asp-101 contacts Zn(2+). Catalysis depends on Glu-135, which acts as the Proton acceptor. Zn(2+) is bound by residues Glu-136, Glu-164, and His-350.

The protein belongs to the peptidase M20A family. DapE subfamily. Homodimer. Zn(2+) serves as cofactor. Requires Co(2+) as cofactor.

The enzyme catalyses N-succinyl-(2S,6S)-2,6-diaminopimelate + H2O = (2S,6S)-2,6-diaminopimelate + succinate. The protein operates within amino-acid biosynthesis; L-lysine biosynthesis via DAP pathway; LL-2,6-diaminopimelate from (S)-tetrahydrodipicolinate (succinylase route): step 3/3. Catalyzes the hydrolysis of N-succinyl-L,L-diaminopimelic acid (SDAP), forming succinate and LL-2,6-diaminopimelate (DAP), an intermediate involved in the bacterial biosynthesis of lysine and meso-diaminopimelic acid, an essential component of bacterial cell walls. This Neisseria meningitidis serogroup C (strain 053442) protein is Succinyl-diaminopimelate desuccinylase.